The following is a 613-amino-acid chain: Dihydroxy-acid dehydratase (613 aa).

Asp81 is a binding site for Mg(2+). Cys122 lines the [2Fe-2S] cluster pocket. Mg(2+) is bound by residues Asp123 and Lys124. At Lys124 the chain carries N6-carboxylysine. Cys193 contacts [2Fe-2S] cluster. A Mg(2+)-binding site is contributed by Glu489. The active-site Proton acceptor is Ser515.

Belongs to the IlvD/Edd family. Homodimer. Requires [2Fe-2S] cluster as cofactor. The cofactor is Mg(2+).

The enzyme catalyses (2R)-2,3-dihydroxy-3-methylbutanoate = 3-methyl-2-oxobutanoate + H2O. The catalysed reaction is (2R,3R)-2,3-dihydroxy-3-methylpentanoate = (S)-3-methyl-2-oxopentanoate + H2O. It participates in amino-acid biosynthesis; L-isoleucine biosynthesis; L-isoleucine from 2-oxobutanoate: step 3/4. Its pathway is amino-acid biosynthesis; L-valine biosynthesis; L-valine from pyruvate: step 3/4. Functions in the biosynthesis of branched-chain amino acids. Catalyzes the dehydration of (2R,3R)-2,3-dihydroxy-3-methylpentanoate (2,3-dihydroxy-3-methylvalerate) into 2-oxo-3-methylpentanoate (2-oxo-3-methylvalerate) and of (2R)-2,3-dihydroxy-3-methylbutanoate (2,3-dihydroxyisovalerate) into 2-oxo-3-methylbutanoate (2-oxoisovalerate), the penultimate precursor to L-isoleucine and L-valine, respectively. This is Dihydroxy-acid dehydratase from Pseudomonas putida (strain W619).